A 371-amino-acid chain; its full sequence is Tetraacyldisaccharide 4'-kinase (371 aa).

Residue 63-70 coordinates ATP; the sequence is AVGGAGKT.

It belongs to the LpxK family.

The catalysed reaction is a lipid A disaccharide + ATP = a lipid IVA + ADP + H(+). It functions in the pathway glycolipid biosynthesis; lipid IV(A) biosynthesis; lipid IV(A) from (3R)-3-hydroxytetradecanoyl-[acyl-carrier-protein] and UDP-N-acetyl-alpha-D-glucosamine: step 6/6. In terms of biological role, transfers the gamma-phosphate of ATP to the 4'-position of a tetraacyldisaccharide 1-phosphate intermediate (termed DS-1-P) to form tetraacyldisaccharide 1,4'-bis-phosphate (lipid IVA). This Anaeromyxobacter sp. (strain Fw109-5) protein is Tetraacyldisaccharide 4'-kinase.